Consider the following 790-residue polypeptide: Phenylalanine--tRNA ligase beta subunit (790 aa).

The region spanning 39–154 is the tRNA-binding domain; sequence PDSLNTVVTG…ADTPLGESAC (116 aa). In terms of domain architecture, B5 spans 404-483; the sequence is FSPLSLSVRP…FVQKTQKILP (80 aa). Asp-457, Asp-463, Glu-466, and Glu-467 together coordinate Mg(2+). The 97-residue stretch at 694-790 folds into the FDX-ACB domain; sequence PIYPASSRDI…KLANIGQGNS (97 aa).

It belongs to the phenylalanyl-tRNA synthetase beta subunit family. Type 1 subfamily. In terms of assembly, tetramer of two alpha and two beta subunits. It depends on Mg(2+) as a cofactor.

It localises to the cytoplasm. The catalysed reaction is tRNA(Phe) + L-phenylalanine + ATP = L-phenylalanyl-tRNA(Phe) + AMP + diphosphate + H(+). The sequence is that of Phenylalanine--tRNA ligase beta subunit (pheT) from Chlamydia trachomatis serovar D (strain ATCC VR-885 / DSM 19411 / UW-3/Cx).